Reading from the N-terminus, the 313-residue chain is uncharacterized protein (313 aa).

Helical transmembrane passes span 41 to 61, 68 to 88, and 102 to 122; these read LAGTMILSVLSSPALVSGLMV, VHSVLFPIPIFFSINQLFHYF, and QLLLFLISHFLLLLVLTKLVL.

Belongs to the cytochrome b family.

The protein resides in the mitochondrion membrane. This is an uncharacterized protein from Arabidopsis thaliana (Mouse-ear cress).